The chain runs to 388 residues: Phosphopentomutase (388 aa).

Residues aspartate 11, aspartate 283, histidine 288, aspartate 324, histidine 325, and histidine 336 each contribute to the Mn(2+) site.

This sequence belongs to the phosphopentomutase family. It depends on Mn(2+) as a cofactor.

It is found in the cytoplasm. The enzyme catalyses 2-deoxy-alpha-D-ribose 1-phosphate = 2-deoxy-D-ribose 5-phosphate. It catalyses the reaction alpha-D-ribose 1-phosphate = D-ribose 5-phosphate. It participates in carbohydrate degradation; 2-deoxy-D-ribose 1-phosphate degradation; D-glyceraldehyde 3-phosphate and acetaldehyde from 2-deoxy-alpha-D-ribose 1-phosphate: step 1/2. In terms of biological role, isomerase that catalyzes the conversion of deoxy-ribose 1-phosphate (dRib-1-P) and ribose 1-phosphate (Rib-1-P) to deoxy-ribose 5-phosphate (dRib-5-P) and ribose 5-phosphate (Rib-5-P), respectively. The polypeptide is Phosphopentomutase (Enterococcus faecalis (strain ATCC 700802 / V583)).